The chain runs to 467 residues: Glutamate--tRNA ligase (467 aa).

Residues 9–19 (PSPTGYLHIGG) carry the 'HIGH' region motif. Residues 237–241 (KLSKR) carry the 'KMSKS' region motif. K240 contacts ATP.

It belongs to the class-I aminoacyl-tRNA synthetase family. Glutamate--tRNA ligase type 1 subfamily. Monomer.

It is found in the cytoplasm. It carries out the reaction tRNA(Glu) + L-glutamate + ATP = L-glutamyl-tRNA(Glu) + AMP + diphosphate. Functionally, catalyzes the attachment of glutamate to tRNA(Glu) in a two-step reaction: glutamate is first activated by ATP to form Glu-AMP and then transferred to the acceptor end of tRNA(Glu). This Xylella fastidiosa (strain 9a5c) protein is Glutamate--tRNA ligase.